Here is a 341-residue protein sequence, read N- to C-terminus: Paired box protein Pax-9 (341 aa).

A DNA-binding region (paired) is located at residues 4–130 (AFGEVNQLGG…SSISRILRNK (127 aa)). A PAI subdomain region spans residues 7 to 63 (EVNQLGGVFVNGRPLPNAIRLRIVELAQLGIRPCDISRQLRVSHGCVSKILARYNET). The segment at 82-130 (TVVKHIRTYKQRDPGIFAWEIRDRLLADGVCDKYNVPSVSSISRILRNK) is RED subdomain. The segment at 168 to 189 (AAAAKVPTPPGVPAIPGSVAMP) is interaction with KDM5B.

Interacts with KDM5B.

It is found in the nucleus. Functionally, transcription factor required for normal development of thymus, parathyroid glands, ultimobranchial bodies, teeth, skeletal elements of skull and larynx as well as distal limbs. The chain is Paired box protein Pax-9 (PAX9) from Saguinus oedipus (Cotton-top tamarin).